The following is a 467-amino-acid chain: Fumarate hydratase class II (467 aa).

Residues 98 to 100 (SGT), R126, 129 to 132 (HPND), 139 to 141 (SSN), and T187 contribute to the substrate site. The active-site Proton donor/acceptor is the H188. S318 is an active-site residue. Residues S319 and 324 to 326 (KVN) contribute to the substrate site.

It belongs to the class-II fumarase/aspartase family. Fumarase subfamily. In terms of assembly, homotetramer.

The protein localises to the cytoplasm. It carries out the reaction (S)-malate = fumarate + H2O. The protein operates within carbohydrate metabolism; tricarboxylic acid cycle; (S)-malate from fumarate: step 1/1. Functionally, involved in the TCA cycle. Catalyzes the stereospecific interconversion of fumarate to L-malate. This is Fumarate hydratase class II from Escherichia coli O6:H1 (strain CFT073 / ATCC 700928 / UPEC).